A 218-amino-acid polypeptide reads, in one-letter code: DNA-directed RNA polymerase III subunit RPC7-like (218 aa).

Positions 133–218 (LPKRPPKTTE…SDDNMDEAIY (86 aa)) are disordered. The span at 139 to 160 (KTTEDKEETIQKLETLEKKEEE) shows a compositional bias: basic and acidic residues. Composition is skewed to acidic residues over residues 161–193 (VTSE…EETD) and 201–218 (NGED…EAIY).

This sequence belongs to the eukaryotic RPC7 RNA polymerase subunit family. In terms of assembly, component of the RNA polymerase III (Pol III) complex consisting of 17 subunits. Pol III exists as two alternative complexes defined by the mutually exclusive incorporation of subunit POLR3G/RPC7alpha or POLR3GL/RPC7beta. Found in a trimeric complex with POLR3C/RPC3 and POLR3F/RPC6. Directly interacts with POLR3C. Widely expressed. Expressed in CD4-positive T cells.

Its subcellular location is the nucleus. DNA-dependent RNA polymerase catalyzes the transcription of DNA into RNA using the four ribonucleoside triphosphates as substrates. Specific peripheric component of RNA polymerase III which synthesizes small RNAs, such as 5S rRNA and tRNAs. The protein is DNA-directed RNA polymerase III subunit RPC7-like of Homo sapiens (Human).